The following is a 310-amino-acid chain: Ribosomal RNA small subunit methyltransferase H (310 aa).

Residues 32–34 (AGH), aspartate 51, phenylalanine 78, aspartate 99, and glutamine 106 contribute to the S-adenosyl-L-methionine site.

It belongs to the methyltransferase superfamily. RsmH family.

The protein resides in the cytoplasm. It catalyses the reaction cytidine(1402) in 16S rRNA + S-adenosyl-L-methionine = N(4)-methylcytidine(1402) in 16S rRNA + S-adenosyl-L-homocysteine + H(+). Functionally, specifically methylates the N4 position of cytidine in position 1402 (C1402) of 16S rRNA. This Macrococcus caseolyticus (strain JCSC5402) (Macrococcoides caseolyticum) protein is Ribosomal RNA small subunit methyltransferase H.